We begin with the raw amino-acid sequence, 479 residues long: Aspartyl/glutamyl-tRNA(Asn/Gln) amidotransferase subunit B (479 aa).

This sequence belongs to the GatB/GatE family. GatB subfamily. Heterotrimer of A, B and C subunits.

The enzyme catalyses L-glutamyl-tRNA(Gln) + L-glutamine + ATP + H2O = L-glutaminyl-tRNA(Gln) + L-glutamate + ADP + phosphate + H(+). The catalysed reaction is L-aspartyl-tRNA(Asn) + L-glutamine + ATP + H2O = L-asparaginyl-tRNA(Asn) + L-glutamate + ADP + phosphate + 2 H(+). Its function is as follows. Allows the formation of correctly charged Asn-tRNA(Asn) or Gln-tRNA(Gln) through the transamidation of misacylated Asp-tRNA(Asn) or Glu-tRNA(Gln) in organisms which lack either or both of asparaginyl-tRNA or glutaminyl-tRNA synthetases. The reaction takes place in the presence of glutamine and ATP through an activated phospho-Asp-tRNA(Asn) or phospho-Glu-tRNA(Gln). This Alcanivorax borkumensis (strain ATCC 700651 / DSM 11573 / NCIMB 13689 / SK2) protein is Aspartyl/glutamyl-tRNA(Asn/Gln) amidotransferase subunit B.